A 160-amino-acid chain; its full sequence is Serine-protein kinase RsbW (160 aa).

This sequence belongs to the anti-sigma-factor family.

It catalyses the reaction L-seryl-[protein] + ATP = O-phospho-L-seryl-[protein] + ADP + H(+). It carries out the reaction L-threonyl-[protein] + ATP = O-phospho-L-threonyl-[protein] + ADP + H(+). Its function is as follows. Negative regulator of sigma-B activity. Phosphorylates and inactivates its specific antagonist protein, RsbV. Upon phosphorylation of RsbV, RsbW is released and binds to sigma-B, thereby blocking its ability to form an RNA polymerase holoenzyme (E-sigma-B). The sequence is that of Serine-protein kinase RsbW from Bacillus cereus (strain ZK / E33L).